The sequence spans 246 residues: Uridylate kinase (246 aa).

18 to 21 contributes to the ATP binding site; the sequence is KVSG. A UMP-binding site is contributed by G60. ATP contacts are provided by G61 and R65. Residues D80 and 141-148 contribute to the UMP site; that span reads TGNPFFTT. Residues T168, Q169, Y174, and D177 each contribute to the ATP site.

This sequence belongs to the UMP kinase family. Homohexamer.

Its subcellular location is the cytoplasm. The catalysed reaction is UMP + ATP = UDP + ADP. The protein operates within pyrimidine metabolism; CTP biosynthesis via de novo pathway; UDP from UMP (UMPK route): step 1/1. Its activity is regulated as follows. Inhibited by UTP. Its function is as follows. Catalyzes the reversible phosphorylation of UMP to UDP. This Granulibacter bethesdensis (strain ATCC BAA-1260 / CGDNIH1) protein is Uridylate kinase.